The chain runs to 89 residues: NADH-ubiquinone oxidoreductase chain 4L (89 aa).

3 consecutive transmembrane segments (helical) span residues 1–21, 22–42, and 57–77; these read MNLT…NRKN, IILM…LILV, and IYII…LVAF.

This sequence belongs to the complex I subunit 4L family.

The protein resides in the mitochondrion membrane. It catalyses the reaction a ubiquinone + NADH + 5 H(+)(in) = a ubiquinol + NAD(+) + 4 H(+)(out). Core subunit of the mitochondrial membrane respiratory chain NADH dehydrogenase (Complex I) that is believed to belong to the minimal assembly required for catalysis. Complex I functions in the transfer of electrons from NADH to the respiratory chain. The immediate electron acceptor for the enzyme is believed to be ubiquinone. This Cryphonectria parasitica (Chestnut blight fungus) protein is NADH-ubiquinone oxidoreductase chain 4L (ND4L).